The sequence spans 424 residues: Anaerobic glycerol-3-phosphate dehydrogenase subunit B (424 aa).

It belongs to the anaerobic G-3-P dehydrogenase subunit B family. In terms of assembly, composed of a catalytic GlpA/B dimer and of membrane bound GlpC. FMN serves as cofactor.

It carries out the reaction a quinone + sn-glycerol 3-phosphate = dihydroxyacetone phosphate + a quinol. It functions in the pathway polyol metabolism; glycerol degradation via glycerol kinase pathway; glycerone phosphate from sn-glycerol 3-phosphate (anaerobic route): step 1/1. Functionally, conversion of glycerol 3-phosphate to dihydroxyacetone. Uses fumarate or nitrate as electron acceptor. The chain is Anaerobic glycerol-3-phosphate dehydrogenase subunit B from Yersinia enterocolitica serotype O:8 / biotype 1B (strain NCTC 13174 / 8081).